Here is a 26-residue protein sequence, read N- to C-terminus: Melittin (26 aa).

Glycine 1 bears the N-formylglycine; partial mark. Glutamine 26 bears the Glutamine amide mark.

Belongs to the melittin family. In terms of assembly, monomer (in solution and for integration into membranes), homotetramer (in solution and potentially as a toroidal pore in membranes), and potenially homomultimer (as a toroidal pore in membranes). In terms of tissue distribution, expressed by the venom gland.

Its subcellular location is the secreted. The protein localises to the target cell membrane. Main toxin of bee venom with strong hemolytic activity and antimicrobial activity. It has enhancing effects on bee venom phospholipase A2 activity. This amphipathic toxin binds to negatively charged membrane surface and forms pore by inserting into lipid bilayers inducing the leakage of ions and molecules and the enhancement of permeability that ultimately leads to cell lysis. It acts as a voltage-gated pore with higher selectivity for anions over cations. The ion conductance has been shown to be voltage-dependent. Self-association of melittin in membranes is promoted by high ionic strength, but not by the presence of negatively charged lipids. In vivo, intradermal injection into healthy human volunteers produce sharp pain sensation and an inflammatory response. It produces pain by activating primary nociceptor cells directly and indirectly due to its ability to activate plasma membrane phospholipase A2 and its pore-forming activity. This is Melittin (MELT) from Apis florea (Dwarf honeybee).